The sequence spans 203 residues: Ribosome-binding factor A (203 aa).

Positions 119-141 (LAEVRRDARPAGDEDPYRRPRTV) are enriched in basic and acidic residues. A disordered region spans residues 119–203 (LAEVRRDARP…SPGGDPTAGR (85 aa)). Over residues 142-169 (DEDDEDEDEDLVDEFDEFDRVEELDADA) the composition is skewed to acidic residues.

It belongs to the RbfA family. As to quaternary structure, monomer. Binds 30S ribosomal subunits, but not 50S ribosomal subunits or 70S ribosomes.

It localises to the cytoplasm. Functionally, one of several proteins that assist in the late maturation steps of the functional core of the 30S ribosomal subunit. Associates with free 30S ribosomal subunits (but not with 30S subunits that are part of 70S ribosomes or polysomes). Required for efficient processing of 16S rRNA. May interact with the 5'-terminal helix region of 16S rRNA. This is Ribosome-binding factor A from Frankia alni (strain DSM 45986 / CECT 9034 / ACN14a).